We begin with the raw amino-acid sequence, 190 residues long: Ribose 1,5-bisphosphate phosphokinase PhnN (190 aa).

10–17 lines the ATP pocket; it reads GPSGSGKD.

It belongs to the ribose 1,5-bisphosphokinase family.

The catalysed reaction is alpha-D-ribose 1,5-bisphosphate + ATP = 5-phospho-alpha-D-ribose 1-diphosphate + ADP. It functions in the pathway metabolic intermediate biosynthesis; 5-phospho-alpha-D-ribose 1-diphosphate biosynthesis; 5-phospho-alpha-D-ribose 1-diphosphate from D-ribose 5-phosphate (route II): step 3/3. Its function is as follows. Catalyzes the phosphorylation of ribose 1,5-bisphosphate to 5-phospho-D-ribosyl alpha-1-diphosphate (PRPP). The polypeptide is Ribose 1,5-bisphosphate phosphokinase PhnN (Pseudomonas fluorescens (strain SBW25)).